A 271-amino-acid polypeptide reads, in one-letter code: MSKRLLLFDFDETYFKHNTNEEDLSHLREMEKLLEKLTNNNEVMTAVLTGSTFQSVMDKMDQVNMTFKPLHIFSDLSSKMFTWNNGEYIESETYKKKVFSEPFLFEDIEDILRHISAQYNVEFIPQRAFEGNETHYNFYFHSTGNHSNDRRILEALVRYANDQNYTARFSRSNPLAGDPENAYDIDFTPSNAGKLYATQFLMKKYNIPVKSILGFGDSGNDEAYLSYLEHAYLMSNSRDEALKQKFRLTKYPYYQGITLHVKEFVEGKYDY.

This sequence belongs to the HAD-like hydrolase superfamily.

This is an uncharacterized protein from Staphylococcus aureus.